The chain runs to 734 residues: Photosystem I P700 chlorophyll a apoprotein A2 (734 aa).

Helical transmembrane passes span 46-69 (IFASHFGQLAIIFLWTSGNLFHVA), 135-158 (LYTGALFLLFLSAISLIAGWLHLQ), 175-199 (LNHHLSGLFGVSSLAWTGHLVHVAI), 273-291 (IAHHHLAIAFIFLVAGHMY), 330-353 (LHFQLGLALASLGVITSLVAQHMY), 369-395 (AALYTHHQYIAGFIMTGAFAHGAILVI), 417-439 (AIISHLSWASLFLGFHTLGLYVH), and 517-535 (FLVHHAIALGLHTTTLILV). Residues C559 and C568 each coordinate [4Fe-4S] cluster. A run of 2 helical transmembrane segments spans residues 575–596 (AFYLAVFWMLNTIGWVTFYWHW) and 643–665 (LSVWAWMFLFGHLVWATGFMFLI). Residues H654, M662, and Y670 each contribute to the chlorophyll a site. Residue W671 participates in phylloquinone binding. A helical transmembrane segment spans residues 707–727 (LVGLAHFSVGYIFTYAAFLIA).

This sequence belongs to the PsaA/PsaB family. In terms of assembly, the PsaA/B heterodimer binds the P700 chlorophyll special pair and subsequent electron acceptors. PSI consists of a core antenna complex that captures photons, and an electron transfer chain that converts photonic excitation into a charge separation. The eukaryotic PSI reaction center is composed of at least 11 subunits. P700 is a chlorophyll a/chlorophyll a' dimer, A0 is one or more chlorophyll a, A1 is one or both phylloquinones and FX is a shared 4Fe-4S iron-sulfur center. serves as cofactor.

It is found in the plastid. The protein localises to the chloroplast thylakoid membrane. The catalysed reaction is reduced [plastocyanin] + hnu + oxidized [2Fe-2S]-[ferredoxin] = oxidized [plastocyanin] + reduced [2Fe-2S]-[ferredoxin]. Its function is as follows. PsaA and PsaB bind P700, the primary electron donor of photosystem I (PSI), as well as the electron acceptors A0, A1 and FX. PSI is a plastocyanin-ferredoxin oxidoreductase, converting photonic excitation into a charge separation, which transfers an electron from the donor P700 chlorophyll pair to the spectroscopically characterized acceptors A0, A1, FX, FA and FB in turn. Oxidized P700 is reduced on the lumenal side of the thylakoid membrane by plastocyanin. This Atropa belladonna (Belladonna) protein is Photosystem I P700 chlorophyll a apoprotein A2.